The primary structure comprises 606 residues: Polypeptide N-acetylgalactosaminyltransferase 9 (606 aa).

Over 1–6 (MAVARK) the chain is Cytoplasmic. A helical; Signal-anchor for type II membrane protein transmembrane segment spans residues 7–29 (IRTLLTVNILVFVGIVLFSVYCR). Over 30 to 606 (LQGRSQELVR…IRNWIKHARH (577 aa)) the chain is Lumenal. The tract at residues 43–62 (GGCRPRPATPAPGSPLRSGG) is disordered. 2 cysteine pairs are disulfide-bonded: cysteine 144–cysteine 375 and cysteine 366–cysteine 445. The interval 153-264 (LPQVSVVFIF…TGWAEPALSR (112 aa)) is catalytic subdomain A. Residues aspartate 194 and arginine 225 each coordinate substrate. The Mn(2+) site is built by aspartate 248, histidine 250, and histidine 380. The tract at residues 321 to 383 (PIRTPAMIGC…PCSRVAHIER (63 aa)) is catalytic subdomain B. Substrate-binding residues include arginine 383 and tyrosine 388. N-linked (GlcNAc...) asparagine glycosylation is present at asparagine 463. The Ricin B-type lectin domain maps to 467 to 603 (TYGEVRNSKA…KWMIRNWIKH (137 aa)). 3 disulfides stabilise this stretch: cysteine 480–cysteine 496, cysteine 528–cysteine 543, and cysteine 570–cysteine 590.

The protein belongs to the glycosyltransferase 2 family. GalNAc-T subfamily. Requires Mn(2+) as cofactor.

The protein resides in the golgi apparatus membrane. It catalyses the reaction L-seryl-[protein] + UDP-N-acetyl-alpha-D-galactosamine = a 3-O-[N-acetyl-alpha-D-galactosaminyl]-L-seryl-[protein] + UDP + H(+). It carries out the reaction L-threonyl-[protein] + UDP-N-acetyl-alpha-D-galactosamine = a 3-O-[N-acetyl-alpha-D-galactosaminyl]-L-threonyl-[protein] + UDP + H(+). Its pathway is protein modification; protein glycosylation. In terms of biological role, catalyzes the initial reaction in O-linked oligosaccharide biosynthesis, the transfer of an N-acetyl-D-galactosamine residue to a serine or threonine residue on the protein receptor. Does not glycosylate apomucin or SDC3. The polypeptide is Polypeptide N-acetylgalactosaminyltransferase 9 (GALNT9) (Macaca fascicularis (Crab-eating macaque)).